A 569-amino-acid polypeptide reads, in one-letter code: Lysine--tRNA ligase (569 aa).

The Mg(2+) site is built by Glu414 and Glu421.

Belongs to the class-II aminoacyl-tRNA synthetase family. In terms of assembly, homodimer. Mg(2+) is required as a cofactor.

Its subcellular location is the cytoplasm. It catalyses the reaction tRNA(Lys) + L-lysine + ATP = L-lysyl-tRNA(Lys) + AMP + diphosphate. The protein is Lysine--tRNA ligase of Christiangramia forsetii (strain DSM 17595 / CGMCC 1.15422 / KT0803) (Gramella forsetii).